A 515-amino-acid chain; its full sequence is Maturase K (515 aa).

The protein belongs to the intron maturase 2 family. MatK subfamily.

It is found in the plastid. The protein localises to the chloroplast. Its function is as follows. Usually encoded in the trnK tRNA gene intron. Probably assists in splicing its own and other chloroplast group II introns. This Zingiber mioga (Myoga ginger) protein is Maturase K.